A 58-amino-acid chain; its full sequence is Small ribosomal subunit protein bS21 (58 aa).

Residues 36-58 (EFYEKPSVKRKRKSEAARKRKKF) form a disordered region. Basic residues predominate over residues 43 to 58 (VKRKRKSEAARKRKKF).

Belongs to the bacterial ribosomal protein bS21 family.

This Streptococcus uberis (strain ATCC BAA-854 / 0140J) protein is Small ribosomal subunit protein bS21.